Here is a 119-residue protein sequence, read N- to C-terminus: Large ribosomal subunit protein bL20 (119 aa).

The protein belongs to the bacterial ribosomal protein bL20 family.

Its function is as follows. Binds directly to 23S ribosomal RNA and is necessary for the in vitro assembly process of the 50S ribosomal subunit. It is not involved in the protein synthesizing functions of that subunit. This chain is Large ribosomal subunit protein bL20, found in Streptococcus equi subsp. equi (strain 4047).